The following is a 369-amino-acid chain: Methionine import ATP-binding protein MetN 2 (369 aa).

The 238-residue stretch at 33–270 folds into the ABC transporter domain; that stretch reads VRFIGLGKTY…PRHEVTRTLL (238 aa). An ATP-binding site is contributed by 67-74; that stretch reads GRSGAGKS.

This sequence belongs to the ABC transporter superfamily. Methionine importer (TC 3.A.1.24) family. The complex is composed of two ATP-binding proteins (MetN), two transmembrane proteins (MetI) and a solute-binding protein (MetQ).

The protein resides in the cell inner membrane. It carries out the reaction L-methionine(out) + ATP + H2O = L-methionine(in) + ADP + phosphate + H(+). The catalysed reaction is D-methionine(out) + ATP + H2O = D-methionine(in) + ADP + phosphate + H(+). Functionally, part of the ABC transporter complex MetNIQ involved in methionine import. Responsible for energy coupling to the transport system. The protein is Methionine import ATP-binding protein MetN 2 of Pseudomonas putida (strain ATCC 47054 / DSM 6125 / CFBP 8728 / NCIMB 11950 / KT2440).